We begin with the raw amino-acid sequence, 71 residues long: MPSIKVRENEPFDIALRRFRRTCDRAGVITDVRKKEFYEKPTWVNKRMKAAAVKRTHKEMAKNRVHRKRMY.

It belongs to the bacterial ribosomal protein bS21 family.

The sequence is that of Small ribosomal subunit protein bS21 from Ruthia magnifica subsp. Calyptogena magnifica.